The sequence spans 485 residues: Phosphoglucosamine mutase (485 aa).

Residue S133 is the Phosphoserine intermediate of the active site. 4 residues coordinate Mg(2+): S133, D274, D276, and D278. The residue at position 133 (S133) is a Phosphoserine.

Belongs to the phosphohexose mutase family. The cofactor is Mg(2+). Activated by phosphorylation.

It catalyses the reaction alpha-D-glucosamine 1-phosphate = D-glucosamine 6-phosphate. Functionally, catalyzes the conversion of glucosamine-6-phosphate to glucosamine-1-phosphate. This chain is Phosphoglucosamine mutase, found in Rippkaea orientalis (strain PCC 8801 / RF-1) (Cyanothece sp. (strain PCC 8801)).